Here is a 512-residue protein sequence, read N- to C-terminus: Protein SHC1 (512 aa).

Acidic residues predominate over residues 101 to 113 (EQDEFENDVEDDA). 2 disordered regions span residues 101-122 (EQDE…EKSQ) and 144-165 (DGNS…SVAL). Sel1-like repeat units lie at residues 318-353 (PDAQ…KRLH), 354-389 (IESV…TKNH), 390-429 (PAAM…SMAS), and 433-470 (CGAP…ALGH).

Belongs to the SKT5 family.

The protein localises to the cytoplasm. Its subcellular location is the cytoplasmic granule membrane. Required for the activation of chitin synthase III (CHS3) activity during the sporulation process. This is Protein SHC1 (SHC1) from Saccharomyces cerevisiae (strain YJM789) (Baker's yeast).